A 358-amino-acid chain; its full sequence is MGAVWSALLVGGGLAGALFVWLLRGGPGDTGKDGDAEQEKDAPLGGAAIPGGHQSGSSGLSPGPSGQELVTKPEHLQESNGHLISKTKDLGKLQAASWRLQNPSREVCDNSREHVPSGQFPDTEAPATSETSNSRSYSEVSRNESLESPMGEWGFQKGQEISAKAATCFAEKLPSSNLLKNRAKEEMSLSDLNSQDRVDHEEWEMVPRHSSWGDVGVGGSLKAPVLNLNQGMDNGRSTLVEARGQQVHGKMERVAVMPAGSQQVSVRFQVHYVTSTDVQFIAVTGDHECLGRWNTYIPLHYNKDGFWSHSIFLPADTVVEWKFVLVENGGVTRWEECSNRFLETGHEDKVVHAWWGIH.

Residues 1–6 (MGAVWS) are Extracellular-facing. A helical transmembrane segment spans residues 7–23 (ALLVGGGLAGALFVWLL). The Cytoplasmic segment spans residues 24–358 (RGGPGDTGKD…KVVHAWWGIH (335 aa)). Residues 30–42 (TGKDGDAEQEKDA) are compositionally biased toward basic and acidic residues. Disordered stretches follow at residues 30–70 (TGKD…QELV) and 104–151 (SREV…SPMG). The segment covering 50-66 (PGGHQSGSSGLSPGPSG) has biased composition (low complexity). Residue S65 is modified to Phosphoserine. A compositionally biased stretch (basic and acidic residues) spans 106-115 (EVCDNSREHV). Position 117 is a phosphoserine (S117). The segment covering 126 to 140 (PATSETSNSRSYSEV) has biased composition (polar residues). Residues S148, S175, S188, and S194 each carry the phosphoserine modification. The short motif at 200–206 (HEEWEMV) is the LIR element. 3 positions are modified to phosphoserine: S210, S211, and S220. Positions 258–357 (PAGSQQVSVR…DKVVHAWWGI (100 aa)) constitute a CBM20 domain.

As to quaternary structure, interacts with the ATG8 family proteins GABARAP and GABARAPL1. Interacts with several glycogen-associated proteins, such as GYS2 (liver glycogen synthase), GDE (glycogen debranching enzyme), GBE1 (glycogen branching enzyme 1) and EPM2A (Laforin). In terms of processing, ubiquitinated, which leads to proteasomal degradation. As to expression, expressed at high level in skeletal and cardiac muscles. Moderately expressed in liver and placenta. No expression is found in pancreas, kidney or lung. Present in skeletal muscle, heart and placenta (at protein level).

It localises to the preautophagosomal structure membrane. Its subcellular location is the endoplasmic reticulum membrane. It is found in the cell membrane. The protein localises to the sarcolemma. The protein resides in the T-tubule. Functionally, acts as a cargo receptor for glycogen. Delivers its cargo to an autophagic pathway called glycophagy, resulting in the transport of glycogen to lysosomes. This Homo sapiens (Human) protein is Starch-binding domain-containing protein 1.